Here is a 549-residue protein sequence, read N- to C-terminus: Copalyl diphosphate synthase (549 aa).

Positions 321-326 match the DXDDTA motif motif; sequence DADDTA. Positions 451-457 match the QXXDGSW motif motif; the sequence is QRDDGSW.

It belongs to the terpene synthase family. Requires Mg(2+) as cofactor.

The enzyme catalyses (2E,6E,10E)-geranylgeranyl diphosphate = (+)-copalyl diphosphate. In terms of biological role, involved in the biosynthesis of the labdane-type bicyclic diterpene labda-8(17),12(E),14-triene. Catalyzes the conversion of geranylgeranyl diphosphate (GGDP) into (+)-copalyl diphosphate. The sequence is that of Copalyl diphosphate synthase from Streptomyces anulatus (Streptomyces chrysomallus).